We begin with the raw amino-acid sequence, 303 residues long: Dipeptide transport system permease protein DppB (303 aa).

7 consecutive transmembrane segments (helical) span residues 9–29 (LGLLLLTLFLIVTLTFFMMQV), 62–82 (YFIYVGHMFTGNFGTSFIYTN), 93–113 (LPVSMQLGTQALILGTVLGAL), 129–149 (IFGFLSVLGISVPSFVIGTLI), 166–186 (GTFSQTIMPTIALSFAPMAVV), 227–247 (IPMLTLIGPMAAGLLTGSVLI), and 269–289 (FPVIMATTIVYAVILMVFILV). The ABC transmembrane type-1 domain occupies 93–290 (LPVSMQLGTQ…VILMVFILVT (198 aa)).

Belongs to the binding-protein-dependent transport system permease family. OppBC subfamily. The complex is composed of two ATP-binding proteins (DppD and DppF), two transmembrane proteins (DppB and DppC) and a solute-binding protein (DppA).

The protein localises to the cell membrane. Its function is as follows. Part of the ABC transporter DppABCDF involved in dipeptide transport. Responsible for the translocation of the substrate across the membrane. The sequence is that of Dipeptide transport system permease protein DppB from Lactococcus lactis subsp. cremoris (strain MG1363).